Reading from the N-terminus, the 627-residue chain is Neuronal acetylcholine receptor subunit alpha-4 (627 aa).

Residues 1 to 28 (MELGGPGAPRLLPPLLLLLGTGLLRASS) form the signal peptide. Topologically, residues 29–242 (HVETRAHAEE…ITYAFVIRRL (214 aa)) are extracellular. An N-linked (GlcNAc...) asparagine glycan is attached at Asn-57. 2 residues coordinate Ca(2+): Val-76 and Glu-78. 2 N-linked (GlcNAc...) asparagine glycosylation sites follow: Asn-107 and Asn-174. Cystine bridges form between Cys-161/Cys-175 and Cys-225/Cys-226. A helical membrane pass occupies residues 243-267 (PLFYTINLIIPCLLISCLTVLVFYL). Cys-271 carries the S-palmitoyl cysteine lipid modification. The next 2 helical transmembrane spans lie at 275–293 (ITLC…LLIT) and 309–330 (YLLF…VLNV). Residues 331 to 600 (HHRSPRTHTM…WKYVAMVIDR (270 aa)) are Cytoplasmic-facing. Disordered regions lie at residues 382 to 479 (PRFW…EAVE) and 497 to 559 (DATS…RHLP). 3 positions are modified to phosphoserine: Ser-424, Ser-538, and Ser-541. A helical transmembrane segment spans residues 601-619 (IFLWMFIIVCLLGTVGLFL).

It belongs to the ligand-gated ion channel (TC 1.A.9) family. Acetylcholine receptor (TC 1.A.9.1) subfamily. Alpha-4/CHRNA4 sub-subfamily. Neuronal AChR is composed of two different types of subunits: alpha and beta. CHRNA4 forms heteropentameric neuronal acetylcholine receptors with CHRNB2 and CHRNB4, as well as CHRNA5 and CHRNB3 as accesory subunits. Found in two major stoichiometric forms, LS (low agonist sensitivity): (CHRNA4)3:(CHRNB2)2 and HS (high agonist sensitivity): (CHRNA4)2:(CHRNB2)3, the two stoichiometric forms differ in their unitary conductance, calcium permeability, ACh sensitivity and potentiation by divalent cation. Cells produce predominantly an (CHRNA4)3:(CHRNB2)2 nAChR. The (CHRNA4)2:(CHRNB2)3 expression is selectively up-regulated by nicotine and has lower single channel conductance and calcium permeability. In the striatum, also forms CHRNA4:CHRNA6:CHRNB2 complexes. Also found in the stoichiometric form: (CHRNA4:CHRNB2)2:CHRNB3. Interacts with RIC3; which is required for proper folding and assembly. Interacts with LYPD6.

It localises to the synaptic cell membrane. Its subcellular location is the cell membrane. It catalyses the reaction Ca(2+)(in) = Ca(2+)(out). The enzyme catalyses K(+)(in) = K(+)(out). The catalysed reaction is Na(+)(in) = Na(+)(out). Its activity is regulated as follows. Activated by a myriad of ligands such as acetylcholine, cytisine, nicotine, choline and epibatidine. Channel potentiation by calcium is stoichiometry-selective, CHRNA4:CHRNB2 nACh receptor is achieved by calcium association with topographically distinct sites framed by anionic residues within the CHRNA4 subunit and between the CHRNA4 and CHRNB2 subunits. nAChR activity is inhibited by the antagonist alpha-conotoxins BuIA, PnIA, GID and MII, small disulfide-constrained peptides from cone snails. Functionally, component of neuronal acetylcholine receptors (nAChRs) that function as pentameric, ligand-gated cation channels with high calcium permeability among other activities. nAChRs are excitatory neurotrasnmitter receptors formed by a collection of nAChR subunits known to mediate synaptic transmission in the nervous system and the neuromuscular junction. Each nAchR subunit confers differential attributes to channel properties, including activation, deactivation and desensitization kinetics, pH sensitivity, cation permeability, and binding to allosteric modulators. CHRNA4 forms heteropentameric neuronal acetylcholine receptors with CHRNB2 and CHRNB4, as well as CHRNA5 and CHRNB3 as accesory subunits. Is the most abundant nAChR subtype expressed in the central nervous system. Found in two major stoichiometric forms,(CHRNA4)3:(CHRNB2)2 and (CHRNA4)2:(CHRNB2)3, the two stoichiometric forms differ in their unitary conductance, calcium permeability, ACh sensitivity and potentiation by divalent cation. Involved in the modulation of calcium-dependent signaling pathways, influences the release of neurotransmitters, including dopamine, glutamate and GABA. The sequence is that of Neuronal acetylcholine receptor subunit alpha-4 (CHRNA4) from Pan troglodytes (Chimpanzee).